The chain runs to 666 residues: Long chain acyl-CoA synthetase 4 (666 aa).

228-239 (IMYTSGTTGDPK) contacts ATP. The tract at residues 495 to 519 (DGWLHTGDVGEWQPDGSMKIIDRKK) is fatty acid-binding.

This sequence belongs to the ATP-dependent AMP-binding enzyme family. Mg(2+) is required as a cofactor.

The catalysed reaction is a long-chain fatty acid + ATP + CoA = a long-chain fatty acyl-CoA + AMP + diphosphate. The protein operates within lipid metabolism; fatty acid metabolism. Functionally, activation of long-chain fatty acids for both synthesis of cellular lipids, and degradation via beta-oxidation. Preferentially uses palmitate, palmitoleate, oleate and linoleate. The polypeptide is Long chain acyl-CoA synthetase 4 (LACS4) (Arabidopsis thaliana (Mouse-ear cress)).